The chain runs to 1033 residues: Isoleucine--tRNA ligase 2 (1033 aa).

The 'HIGH' region motif lies at Pro-47–His-57. The short motif at Lys-590 to Ser-594 is the 'KMSKS' region element. Lys-593 contributes to the ATP binding site.

The protein belongs to the class-I aminoacyl-tRNA synthetase family. IleS type 2 subfamily. Monomer. Zn(2+) is required as a cofactor.

The protein resides in the cytoplasm. The catalysed reaction is tRNA(Ile) + L-isoleucine + ATP = L-isoleucyl-tRNA(Ile) + AMP + diphosphate. In terms of biological role, catalyzes the attachment of isoleucine to tRNA(Ile). As IleRS can inadvertently accommodate and process structurally similar amino acids such as valine, to avoid such errors it has two additional distinct tRNA(Ile)-dependent editing activities. One activity is designated as 'pretransfer' editing and involves the hydrolysis of activated Val-AMP. The other activity is designated 'posttransfer' editing and involves deacylation of mischarged Val-tRNA(Ile). This chain is Isoleucine--tRNA ligase 2, found in Bacillus thuringiensis subsp. konkukian (strain 97-27).